The following is a 432-amino-acid chain: Trigger factor (432 aa).

Residues 161–246 enclose the PPIase FKBP-type domain; that stretch reads EDRVTIDFTG…LKKVEERELP (86 aa).

It belongs to the FKBP-type PPIase family. Tig subfamily. Homodimer and monomer. In vivo most of the ribosomes are in complex with monomeric TF. Uncomplexed TF, however, is in a monomer-dimer equilibrium with approximately two thirds of TF existing in a dimeric state.

The protein localises to the cytoplasm. The catalysed reaction is [protein]-peptidylproline (omega=180) = [protein]-peptidylproline (omega=0). Its function is as follows. Involved in protein export. Acts as a chaperone by maintaining the newly synthesized protein in an open conformation. Functions as a peptidyl-prolyl cis-trans isomerase. This chain is Trigger factor, found in Escherichia coli O139:H28 (strain E24377A / ETEC).